Consider the following 261-residue polypeptide: MWFLILFLALSLGGIDAAPPVQSRIVGGFKCEKNSQPWHVAVYRYKEYICGGVLLDANWVLTAAHCYYEKNNVWLGKNNLYQDEPSAQHRLVSKSFLHPCYNMSLHRNRIQNPQDDYSYDLMLLRLSKPADITDVVKPIALPTEEPKLGSTCLASGWGSIIPVKFQYAKDLQCVNLKLLPNEDCDKAYVQKVTDVMLCAGVKGGGKDTCKGDSGGPLICDGVLQGLTSWGYNPCGEPKKPGVYTKLIKFTSWIKDTLAQNP.

An N-terminal signal peptide occupies residues M1–A18. A propeptide spans P19 to R24 (activation peptide). Positions I25–A258 constitute a Peptidase S1 domain. 5 disulfides stabilise this stretch: C31-C173, C50-C66, C152-C219, C184-C198, and C209-C234. H65 (charge relay system) is an active-site residue. An N-linked (GlcNAc...) asparagine glycan is attached at N102. Residue D120 is the Charge relay system of the active site. S213 functions as the Charge relay system in the catalytic mechanism.

Belongs to the peptidase S1 family. Kallikrein subfamily.

The catalysed reaction is Preferential cleavage of Arg-|-Xaa bonds in small molecule substrates. Highly selective action to release kallidin (lysyl-bradykinin) from kininogen involves hydrolysis of Met-|-Xaa or Leu-|-Xaa.. In terms of biological role, glandular kallikreins cleave Met-Lys and Arg-Ser bonds in kininogen to release Lys-bradykinin. The polypeptide is Kallikrein 1-related peptidase b1 (Klk1b1) (Mus musculus (Mouse)).